A 609-amino-acid chain; its full sequence is UvrABC system protein C (609 aa).

In terms of domain architecture, GIY-YIG spans 16–94; that stretch reads SSAGVYRMYD…IKQYMPKYNV (79 aa). The UVR domain occupies 203-238; the sequence is QQVISTLVAKMEQAAQQQEYEQAARFRDQIMALRKV.

It belongs to the UvrC family. As to quaternary structure, interacts with UvrB in an incision complex.

It localises to the cytoplasm. Functionally, the UvrABC repair system catalyzes the recognition and processing of DNA lesions. UvrC both incises the 5' and 3' sides of the lesion. The N-terminal half is responsible for the 3' incision and the C-terminal half is responsible for the 5' incision. The sequence is that of UvrABC system protein C from Shewanella putrefaciens (strain CN-32 / ATCC BAA-453).